A 107-amino-acid chain; its full sequence is DNA polymerase delta subunit 4 (107 aa).

The PCNA-interaction protein motif (PIP box) motif lies at 1-16; it reads MGRKRFITDSYPVVKK. The interval 1 to 40 is disordered; it reads MGRKRFITDSYPVVKKREGPPGHSKGELAPELGEDTQSLS. Residues 15–28 are compositionally biased toward basic and acidic residues; that stretch reads KKREGPPGHSKGEL.

This sequence belongs to the DNA polymerase delta subunit 4 family. Component of the tetrameric DNA polymerase delta complex (Pol-delta4), which consists of POLD1/p125, POLD2/p50, POLD3/p66/p68 and POLD4/p12, with POLD1 bearing DNA polymerase and 3' to 5' proofreading exonuclease activities. Within this complex, directly interacts with POLD1 and POLD2. Directly interacts with PCNA, as do POLD1 and POLD3; this interaction stimulates Pol-delta4 polymerase activity. As POLD1 and POLD2, directly interacts with WRNIP1; this interaction stimulates DNA polymerase delta-mediated DNA synthesis, independently of the presence of PCNA, possibly by increasing initiation frequency. Upon genotoxic stress induced by DNA damaging agents or by replication stress, POLD4 is proteolytically degraded and Pol-delta4 is converted into a trimeric form of the complex (Pol-delta3) that has an increased proofreading activity. The DNA polymerase delta complex interacts with POLDIP2; this interaction is probably mediated through direct binding to POLD2. Post-translationally, ubiquitinated; undergoes 'Lys-48'-linked polyubiquitination in response to UV irradiation or treatment with an alkylating agent, leading to proteasomal degradation. This modification is mediated, at least in part, by RNF8. In terms of processing, ubiquitinated; undergoes 'Lys-48'-linked ubiquitination in response to UV irradiation, leading to proteasomal degradation. This modification is partly mediated by RNF8 and by the DCX(DTL) E3 ubiquitin ligase complex (also called CRL4(CDT2)). Efficient degradation requires the presence of PCNA and is required for the inhibition of fork progression after DNA damage.

It localises to the nucleus. As a component of the tetrameric DNA polymerase delta complex (Pol-delta4), plays a role in high fidelity genome replication and repair. Within this complex, increases the rate of DNA synthesis and decreases fidelity by regulating POLD1 polymerase and proofreading 3' to 5' exonuclease activity. Pol-delta4 participates in Okazaki fragment processing, through both the short flap pathway, as well as a nick translation system. Under conditions of DNA replication stress, required for the repair of broken replication forks through break-induced replication (BIR), a mechanism that may induce segmental genomic duplications of up to 200 kb. Involved in Pol-delta4 translesion synthesis (TLS) of templates carrying O6-methylguanine or abasic sites. Its degradation in response to DNA damage is required for the inhibition of fork progression and cell survival. This chain is DNA polymerase delta subunit 4 (Pold4), found in Mus musculus (Mouse).